The primary structure comprises 429 residues: U3 small nucleolar RNA-associated protein 18 homolog (429 aa).

WD repeat units follow at residues 117–156, 295–336, 345–386, and 392–428; these read RYTR…KKDR, TDDG…NSTN, NLVT…TFKN, and GKVT…HFTD.

It belongs to the WD repeat UTP18 family.

The protein localises to the nucleus. Its subcellular location is the nucleolus. Its function is as follows. Involved in nucleolar processing of pre-18S ribosomal RNA. The sequence is that of U3 small nucleolar RNA-associated protein 18 homolog from Caenorhabditis elegans.